The sequence spans 277 residues: Urease accessory protein UreD (277 aa).

The protein belongs to the UreD family. UreD, UreF and UreG form a complex that acts as a GTP-hydrolysis-dependent molecular chaperone, activating the urease apoprotein by helping to assemble the nickel containing metallocenter of UreC. The UreE protein probably delivers the nickel.

It localises to the cytoplasm. Its function is as follows. Required for maturation of urease via the functional incorporation of the urease nickel metallocenter. The sequence is that of Urease accessory protein UreD from Pseudomonas putida (strain GB-1).